The chain runs to 599 residues: UvrABC system protein C (599 aa).

The 79-residue stretch at 15 to 93 (EKPGCYQYFD…IKEYQPRYNV (79 aa)) folds into the GIY-YIG domain. A UVR domain is found at 207–242 (HRLVRMYRDRMQVYSEGLRFEEAQICKERIELLERY).

It belongs to the UvrC family. In terms of assembly, interacts with UvrB in an incision complex.

The protein localises to the cytoplasm. Functionally, the UvrABC repair system catalyzes the recognition and processing of DNA lesions. UvrC both incises the 5' and 3' sides of the lesion. The N-terminal half is responsible for the 3' incision and the C-terminal half is responsible for the 5' incision. This Porphyromonas gingivalis (strain ATCC BAA-308 / W83) protein is UvrABC system protein C.